Here is a 258-residue protein sequence, read N- to C-terminus: Pimeloyl-[acyl-carrier protein] methyl ester esterase (258 aa).

In terms of domain architecture, AB hydrolase-1 spans 16-241 (LVLLHGWGLN…GSAHAPFVSH (226 aa)). Residues Trp22, 82–83 (SM), and 143–147 (FLALQ) contribute to the substrate site. Catalysis depends on Ser82, which acts as the Nucleophile. Residues Asp207 and His235 contribute to the active site. Substrate is bound at residue His235.

This sequence belongs to the AB hydrolase superfamily. Carboxylesterase BioH family. As to quaternary structure, monomer.

The protein resides in the cytoplasm. It carries out the reaction 6-carboxyhexanoyl-[ACP] methyl ester + H2O = 6-carboxyhexanoyl-[ACP] + methanol + H(+). Its pathway is cofactor biosynthesis; biotin biosynthesis. Functionally, the physiological role of BioH is to remove the methyl group introduced by BioC when the pimeloyl moiety is complete. It allows to synthesize pimeloyl-ACP via the fatty acid synthetic pathway through the hydrolysis of the ester bonds of pimeloyl-ACP esters. The polypeptide is Pimeloyl-[acyl-carrier protein] methyl ester esterase (Yersinia enterocolitica serotype O:8 / biotype 1B (strain NCTC 13174 / 8081)).